A 158-amino-acid chain; its full sequence is 2-C-methyl-D-erythritol 2,4-cyclodiphosphate synthase (158 aa).

The a divalent metal cation site is built by D9 and H11. Residues 9 to 11 (DVH) and 35 to 36 (HS) contribute to the 4-CDP-2-C-methyl-D-erythritol 2-phosphate site. H43 is an a divalent metal cation binding site. Residues 57–59 (DIG), 62–66 (FPDTD), 101–107 (AQAPKMA), 133–136 (TTTE), F140, and R143 each bind 4-CDP-2-C-methyl-D-erythritol 2-phosphate.

The protein belongs to the IspF family. In terms of assembly, homotrimer. Requires a divalent metal cation as cofactor.

The enzyme catalyses 4-CDP-2-C-methyl-D-erythritol 2-phosphate = 2-C-methyl-D-erythritol 2,4-cyclic diphosphate + CMP. It functions in the pathway isoprenoid biosynthesis; isopentenyl diphosphate biosynthesis via DXP pathway; isopentenyl diphosphate from 1-deoxy-D-xylulose 5-phosphate: step 4/6. Involved in the biosynthesis of isopentenyl diphosphate (IPP) and dimethylallyl diphosphate (DMAPP), two major building blocks of isoprenoid compounds. Catalyzes the conversion of 4-diphosphocytidyl-2-C-methyl-D-erythritol 2-phosphate (CDP-ME2P) to 2-C-methyl-D-erythritol 2,4-cyclodiphosphate (ME-CPP) with a corresponding release of cytidine 5-monophosphate (CMP). The chain is 2-C-methyl-D-erythritol 2,4-cyclodiphosphate synthase from Vibrio campbellii (strain ATCC BAA-1116).